The chain runs to 577 residues: Cleavage stimulation factor subunit 2 (577 aa).

Residue Ser14 is modified to Phosphoserine. One can recognise an RRM domain in the interval 16–94; it reads RSVFVGNIPY…RALRVDNAAS (79 aa). The interval 108 to 248 is interactions with CSTF3 and SYMPK; it reads APVIESPYGE…VNGAPPLMQA (141 aa). Lys189 participates in a covalent cross-link: Glycyl lysine isopeptide (Lys-Gly) (interchain with G-Cter in SUMO2). Positions 207 to 230 are disordered; it reads PVHGAGPGSGSNVSMNQQNPQAPQ. Arg308 is subject to Omega-N-methylarginine. The disordered stretch occupies residues 319 to 409; sequence RGLLGDAPND…DGRGGRDPRG (91 aa). A compositionally biased stretch (basic and acidic residues) spans 360–373; sequence PGHESRGPPPHELR. The 1; approximate repeat unit spans residues 410 to 414; that stretch reads IDARG. Residues 410–469 are 12 X 5 AA tandem repeats of M-E-A-R-[AG]; the sequence is IDARGMEARAMEARGLDARGLEARAMEARAMEARAMEARAMEARAMEVRGMEARGMDTRG. 2 repeat units span residues 415–419 and 420–424. The stretch at 425-429 is one 4; approximate repeat; sequence LDARG. A 5; approximate repeat occupies 430 to 434; that stretch reads LEARA. 4 tandem repeats follow at residues 435-439, 440-444, 445-449, and 450-454. Residues 455 to 459 form a 10; approximate repeat; sequence MEVRG. Repeat 11 spans residues 460–464; sequence MEARG. One copy of the 12; approximate repeat lies at 465–469; the sequence is MDTRG. An omega-N-methylarginine mark is found at Arg468 and Arg475. Residues 509 to 532 are disordered; the sequence is LQGASIQGGSQPGGFSPGQNQVTP. An interaction with RPO2TC1 region spans residues 514-577; the sequence is IQGGSQPGGF…EQIQKSTGAP (64 aa). Ser518 and Ser524 each carry phosphoserine.

As to quaternary structure, the CSTF complex is composed of CSTF1 (50 kDa subunit), CSTF2 (64 kDa subunit) and CSTF3 (77 kDa subunit). CSTF2 directly interacts with CSTF3, SYMPK and RPO2TC1. Interacts with HSF1 in heat-stressed cells. Interacts with CPSF2, CPSF3 and FIP1L1. Interacts with DDX1.

The protein localises to the nucleus. One of the multiple factors required for polyadenylation and 3'-end cleavage of mammalian pre-mRNAs. This subunit is directly involved in the binding to pre-mRNAs. This chain is Cleavage stimulation factor subunit 2 (CSTF2), found in Pongo abelii (Sumatran orangutan).